The following is a 254-amino-acid chain: Alcohol dehydrogenase 2 (254 aa).

10 to 33 serves as a coordination point for NAD(+); the sequence is FVAGLGGIGFDTSREIVKSGPKNL. Ser138 contacts substrate. Tyr151 serves as the catalytic Proton acceptor.

The protein belongs to the short-chain dehydrogenases/reductases (SDR) family. As to quaternary structure, homodimer.

It carries out the reaction a primary alcohol + NAD(+) = an aldehyde + NADH + H(+). It catalyses the reaction a secondary alcohol + NAD(+) = a ketone + NADH + H(+). This Drosophila mulleri (Fruit fly) protein is Alcohol dehydrogenase 2 (Adh2).